A 440-amino-acid polypeptide reads, in one-letter code: Phenylacetate-coenzyme A ligase (440 aa).

This sequence belongs to the phenylacetyl-CoA ligase family. As to quaternary structure, monomer.

It carries out the reaction 2-phenylacetate + ATP + CoA = phenylacetyl-CoA + AMP + diphosphate. The protein operates within aromatic compound metabolism; phenylacetate degradation. Inhibition of activity is observed in the presence of a 1 mM of the divalent cations zinc, copper, and nickel. Its function is as follows. Catalyzes the activation of phenylacetic acid (PA) to phenylacetyl-CoA (PA-CoA). Involved in the phenylalanine metabolism. This chain is Phenylacetate-coenzyme A ligase (paaK), found in Aromatoleum evansii (Azoarcus evansii).